Here is a 410-residue protein sequence, read N- to C-terminus: Protein BTN2 (410 aa).

Disordered stretches follow at residues 223–264 (INEP…TKED) and 276–410 (MQEE…IEEI). Basic and acidic residues-rich tracts occupy residues 233 to 264 (SKIDESHDDVNMSESLKEEEAEKAKEPLTKED) and 276 to 311 (MQEESRKSEQEKAAKEDEERQKKEKEARLKARKESL). Positions 243 to 330 (NMSESLKEEE…QQKKLQNSKS (88 aa)) form a coiled coil. A compositionally biased stretch (low complexity) spans 334–362 (SEIEASNKNNNSNSGSAESDNESINSDSD). Over residues 364–373 (TLDFSVSGNT) the composition is skewed to polar residues.

Interacts with RHB1, IST2, TDA3 and YIF1.

Its subcellular location is the cytoplasm. It localises to the late endosome. V-SNARE binding protein that facilitates specific protein retrieval from a late endosome to the Golgi. Modulates the rate of arginine uptake. Involved in pH homeostasis. Required for the correct localization of IST2. May be involved in ion homeostasis together with IST2. This is Protein BTN2 (BTN2) from Saccharomyces cerevisiae (strain ATCC 204508 / S288c) (Baker's yeast).